A 482-amino-acid polypeptide reads, in one-letter code: Spore germination protein A1 (482 aa).

Helical transmembrane passes span 242–262 (VAIL…LGIL), 284–304 (FASI…VSFH), 321–341 (ENVP…IELL), 351–371 (PLGQ…AVEA), 373–393 (LVSS…FTVP), and 406–426 (FISM…FMLV).

The protein belongs to the GerABKA family.

The protein localises to the cell membrane. Its function is as follows. Forms a complex at the inner spore membrane which acts as a receptor for L-alanine, thus is involved in the stimulation of germination in response to alanine. Can stimulate germination in the absence of GerD and GerK gene products (fructose and glucose receptors, respectively), but the response is improved in their presence. In Bacillus subtilis (strain 168), this protein is Spore germination protein A1 (gerAA).